The chain runs to 291 residues: Lipoyl synthase (291 aa).

Residues cysteine 33, cysteine 38, cysteine 44, cysteine 59, cysteine 63, cysteine 66, and serine 274 each coordinate [4Fe-4S] cluster. One can recognise a Radical SAM core domain in the interval 45-263; that stretch reads WGEGTATFLI…REAAEAMGFK (219 aa).

Belongs to the radical SAM superfamily. Lipoyl synthase family. [4Fe-4S] cluster is required as a cofactor.

It is found in the cytoplasm. The catalysed reaction is [[Fe-S] cluster scaffold protein carrying a second [4Fe-4S](2+) cluster] + N(6)-octanoyl-L-lysyl-[protein] + 2 oxidized [2Fe-2S]-[ferredoxin] + 2 S-adenosyl-L-methionine + 4 H(+) = [[Fe-S] cluster scaffold protein] + N(6)-[(R)-dihydrolipoyl]-L-lysyl-[protein] + 4 Fe(3+) + 2 hydrogen sulfide + 2 5'-deoxyadenosine + 2 L-methionine + 2 reduced [2Fe-2S]-[ferredoxin]. It functions in the pathway protein modification; protein lipoylation via endogenous pathway; protein N(6)-(lipoyl)lysine from octanoyl-[acyl-carrier-protein]: step 2/2. Functionally, catalyzes the radical-mediated insertion of two sulfur atoms into the C-6 and C-8 positions of the octanoyl moiety bound to the lipoyl domains of lipoate-dependent enzymes, thereby converting the octanoylated domains into lipoylated derivatives. The sequence is that of Lipoyl synthase from Pyrobaculum calidifontis (strain DSM 21063 / JCM 11548 / VA1).